Reading from the N-terminus, the 203-residue chain is Non-specific lipid transfer protein GPI-anchored 20 (203 aa).

A signal peptide spans 1 to 21 (MSKIISLVVAMIAVLALPIRG). Intrachain disulfides connect cysteine 29/cysteine 74, cysteine 40/cysteine 58, cysteine 59/cysteine 99, and cysteine 72/cysteine 108. Residues asparagine 46, asparagine 50, and asparagine 88 are each glycosylated (N-linked (GlcNAc...) asparagine). A disordered region spans residues 119 to 182 (GPAATFGPSM…TSRPSETPSS (64 aa)). Composition is skewed to polar residues over residues 144–156 (AAQTPQSDTTRPF) and 169–179 (DGGSTSRPSET). Serine 172 carries the GPI-anchor amidated serine lipid modification. A propeptide spans 173–203 (TSRPSETPSSAYALSPSLLFFSIALVALKFY) (removed in mature form).

This sequence belongs to the plant LTP family. Expressed in seedlings, preferentially in hypocotyls and roots. Also observed in siliques and sepals.

Its subcellular location is the cell membrane. In terms of biological role, probable lipid transfer protein. The polypeptide is Non-specific lipid transfer protein GPI-anchored 20 (Arabidopsis thaliana (Mouse-ear cress)).